The primary structure comprises 85 residues: Arminin 2b (85 aa).

The signal sequence occupies residues 1-18 (MKTVFAILFLAFIALTYA). Residues 19-57 (RSYEDVKEEIKNEIEKEILEDLEEESDELNDKSKEINDA) constitute a propeptide that is removed on maturation. The residue at position 82 (alanine 82) is an Alanine amide.

This sequence belongs to the arminin family. As to expression, expressed in entodermal epithelium along the body column.

The protein localises to the secreted. The protein resides in the target cell membrane. In terms of biological role, antimicrobial peptide with a broad-spectrum antimicrobial activity. Keeps its antibacterial activity under a wide range of salt concentrations that mimic physiological conditions of human blood, which is surprising, since Hydra is an obligate freshwater animal with nearly no salt tolerance. Does not affect red blood cells. The sequence is that of Arminin 2b from Hydra vulgaris (Hydra).